The chain runs to 241 residues: Adenosylcobinamide-GDP ribazoletransferase (241 aa).

Helical transmembrane passes span 34 to 54 (RIPA…FTGS), 55 to 75 (FLSL…GFYL), 109 to 129 (VGPF…ELIT), 133 to 153 (PVAF…VLVF), 165 to 185 (MLFP…LPLL), 186 to 206 (LIDV…GFLI), and 221 to 241 (VLGG…NYLI).

The protein belongs to the CobS family. It depends on Mg(2+) as a cofactor.

It localises to the cell inner membrane. It carries out the reaction alpha-ribazole + adenosylcob(III)inamide-GDP = adenosylcob(III)alamin + GMP + H(+). It catalyses the reaction alpha-ribazole 5'-phosphate + adenosylcob(III)inamide-GDP = adenosylcob(III)alamin 5'-phosphate + GMP + H(+). It functions in the pathway cofactor biosynthesis; adenosylcobalamin biosynthesis; adenosylcobalamin from cob(II)yrinate a,c-diamide: step 7/7. In terms of biological role, joins adenosylcobinamide-GDP and alpha-ribazole to generate adenosylcobalamin (Ado-cobalamin). Also synthesizes adenosylcobalamin 5'-phosphate from adenosylcobinamide-GDP and alpha-ribazole 5'-phosphate. This is Adenosylcobinamide-GDP ribazoletransferase from Fervidobacterium nodosum (strain ATCC 35602 / DSM 5306 / Rt17-B1).